Here is a 271-residue protein sequence, read N- to C-terminus: NADPH-dependent 7-cyano-7-deazaguanine reductase (271 aa).

Residue 81–83 coordinates substrate; the sequence is IES. Residue 83–84 participates in NADPH binding; the sequence is SK. Residue cysteine 177 is the Thioimide intermediate of the active site. Aspartate 184 functions as the Proton donor in the catalytic mechanism. 216–217 contacts substrate; it reads HE. 245–246 is an NADPH binding site; the sequence is RG.

It belongs to the GTP cyclohydrolase I family. QueF type 2 subfamily. Homodimer.

The protein resides in the cytoplasm. The catalysed reaction is 7-aminomethyl-7-carbaguanine + 2 NADP(+) = 7-cyano-7-deazaguanine + 2 NADPH + 3 H(+). It functions in the pathway tRNA modification; tRNA-queuosine biosynthesis. Its function is as follows. Catalyzes the NADPH-dependent reduction of 7-cyano-7-deazaguanine (preQ0) to 7-aminomethyl-7-deazaguanine (preQ1). The chain is NADPH-dependent 7-cyano-7-deazaguanine reductase from Xanthomonas oryzae pv. oryzae (strain MAFF 311018).